A 97-amino-acid polypeptide reads, in one-letter code: Co-chaperonin GroES (97 aa).

The protein belongs to the GroES chaperonin family. As to quaternary structure, heptamer of 7 subunits arranged in a ring. Interacts with the chaperonin GroEL.

The protein localises to the cytoplasm. Its function is as follows. Together with the chaperonin GroEL, plays an essential role in assisting protein folding. The GroEL-GroES system forms a nano-cage that allows encapsulation of the non-native substrate proteins and provides a physical environment optimized to promote and accelerate protein folding. GroES binds to the apical surface of the GroEL ring, thereby capping the opening of the GroEL channel. The protein is Co-chaperonin GroES of Blochmanniella pennsylvanica (strain BPEN).